Consider the following 132-residue polypeptide: Translation initiation factor 5A (132 aa).

Residue Lys37 is modified to Hypusine.

It belongs to the eIF-5A family.

It is found in the cytoplasm. Functions by promoting the formation of the first peptide bond. This Methanocaldococcus jannaschii (strain ATCC 43067 / DSM 2661 / JAL-1 / JCM 10045 / NBRC 100440) (Methanococcus jannaschii) protein is Translation initiation factor 5A (eif5a).